Here is a 393-residue protein sequence, read N- to C-terminus: Elongation factor Tu (393 aa).

Positions 10 to 203 (KPHVNIGTIG…AVDEFIPEPL (194 aa)) constitute a tr-type G domain. Residues 19 to 26 (GHVDHGKT) form a G1 region. GTP is bound at residue 19–26 (GHVDHGKT). Residue T26 participates in Mg(2+) binding. Residues 60–64 (GITIS) form a G2 region. The segment at 81 to 84 (DCPG) is G3. GTP-binding positions include 81–85 (DCPGH) and 136–139 (NKVD). The G4 stretch occupies residues 136 to 139 (NKVD). A G5 region spans residues 173–175 (SAL).

Belongs to the TRAFAC class translation factor GTPase superfamily. Classic translation factor GTPase family. EF-Tu/EF-1A subfamily. Monomer.

It is found in the cytoplasm. The enzyme catalyses GTP + H2O = GDP + phosphate + H(+). In terms of biological role, GTP hydrolase that promotes the GTP-dependent binding of aminoacyl-tRNA to the A-site of ribosomes during protein biosynthesis. The polypeptide is Elongation factor Tu (Chlorobium phaeobacteroides (strain DSM 266 / SMG 266 / 2430)).